Reading from the N-terminus, the 794-residue chain is Protocadherin beta-6 (794 aa).

Residues 1 to 27 form the signal peptide; the sequence is MMQTKVQNKKRQVAFFILLMLWGEVGS. The Extracellular portion of the chain corresponds to 28–688; sequence ESIQYSVLEE…AQADLLTVYL (661 aa). 5 Cadherin domains span residues 34 to 132, 137 to 241, 246 to 345, 350 to 449, and 454 to 559; these read VLEE…APEF, MLLK…VPEF, YEAQ…APEL, FISP…APAF, and YTLF…SPFV. N-linked (GlcNAc...) asparagine glycosylation occurs at Asn46. An intrachain disulfide couples Cys95 to Cys101. The N-linked (GlcNAc...) asparagine glycan is linked to Asn183. N-linked (GlcNAc...) asparagine glycosylation is present at Asn416. Asn565 carries N-linked (GlcNAc...) asparagine glycosylation. The region spanning 566-669 is the Cadherin 6 domain; it reads GSAPCTELVP…LVDGFSQPYL (104 aa). The helical transmembrane segment at 689–709 threads the bilayer; sequence VVALASVSSLFLFSVLLFVAV. Over 710–794 the chain is Cytoplasmic; the sequence is RLCRRSRAAS…PTSRNSFPFS (85 aa). The tract at residues 773-794 is disordered; it reads PPQGTEREMEETPTSRNSFPFS. The span at 784-794 shows a compositional bias: polar residues; sequence TPTSRNSFPFS.

Forms homodimers in trans (molecules expressed by two different cells). Forms promiscuous heterodimers in cis (at the plasma membrane of the same cell) with other protocadherins.

The protein resides in the cell membrane. Functionally, calcium-dependent cell-adhesion protein involved in cells self-recognition and non-self discrimination. Thereby, it is involved in the establishment and maintenance of specific neuronal connections in the brain. This Pan troglodytes (Chimpanzee) protein is Protocadherin beta-6.